The primary structure comprises 159 residues: Large ribosomal subunit protein uL22 (159 aa).

Belongs to the universal ribosomal protein uL22 family. Part of the 50S ribosomal subunit.

Its function is as follows. This protein binds specifically to 23S rRNA; its binding is stimulated by other ribosomal proteins, e.g. L4, L17, and L20. It is important during the early stages of 50S assembly. It makes multiple contacts with different domains of the 23S rRNA in the assembled 50S subunit and ribosome. In terms of biological role, the globular domain of the protein is located near the polypeptide exit tunnel on the outside of the subunit, while an extended beta-hairpin is found that lines the wall of the exit tunnel in the center of the 70S ribosome. The sequence is that of Large ribosomal subunit protein uL22 from Thermotoga sp. (strain RQ2).